The chain runs to 240 residues: UDP-2,3-diacylglucosamine hydrolase (240 aa).

D8, H10, D41, N79, and H114 together coordinate Mn(2+). 79 to 80 (NR) lines the substrate pocket. Residues D122, S160, N164, K167, and H195 each coordinate substrate. Positions 195 and 197 each coordinate Mn(2+).

The protein belongs to the LpxH family. Mn(2+) serves as cofactor.

The protein resides in the cell inner membrane. The catalysed reaction is UDP-2-N,3-O-bis[(3R)-3-hydroxytetradecanoyl]-alpha-D-glucosamine + H2O = 2-N,3-O-bis[(3R)-3-hydroxytetradecanoyl]-alpha-D-glucosaminyl 1-phosphate + UMP + 2 H(+). It functions in the pathway glycolipid biosynthesis; lipid IV(A) biosynthesis; lipid IV(A) from (3R)-3-hydroxytetradecanoyl-[acyl-carrier-protein] and UDP-N-acetyl-alpha-D-glucosamine: step 4/6. In terms of biological role, hydrolyzes the pyrophosphate bond of UDP-2,3-diacylglucosamine to yield 2,3-diacylglucosamine 1-phosphate (lipid X) and UMP by catalyzing the attack of water at the alpha-P atom. Involved in the biosynthesis of lipid A, a phosphorylated glycolipid that anchors the lipopolysaccharide to the outer membrane of the cell. This is UDP-2,3-diacylglucosamine hydrolase from Cellvibrio japonicus (strain Ueda107) (Pseudomonas fluorescens subsp. cellulosa).